The sequence spans 193 residues: mRNA 3'-end-processing protein YTH1 (193 aa).

5 C3H1-type zinc fingers span residues 24–52 (DPNRPLCRGFLQFDGCPRGNSCPDKHLAP), 54–81 (FLNKIVCKHWLRGLCKKGLNCEFLHEYN), 82–110 (LQKMPECQFYVKNGFCTQSPDCQYLHIDP), 111–138 (ASKIPVCFNYEKGFCKMGPECSRKHIRR), and 140–162 (PCELYMTGFCPKGRVCEFAHPKF).

Belongs to the CPSF4/YTH1 family.

It localises to the nucleus. Functionally, component of the cleavage factor I (CF I) involved in pre-mRNA 3'-end processing. This Yarrowia lipolytica (strain CLIB 122 / E 150) (Yeast) protein is mRNA 3'-end-processing protein YTH1 (YTH1).